Here is a 240-residue protein sequence, read N- to C-terminus: Orotidine 5'-phosphate decarboxylase (240 aa).

Substrate is bound by residues D15, K37, 64–73, T125, R186, Q195, G215, and R216; that span reads DLKYHDIPNT. K66 serves as the catalytic Proton donor.

The protein belongs to the OMP decarboxylase family. Type 1 subfamily. As to quaternary structure, homodimer.

The enzyme catalyses orotidine 5'-phosphate + H(+) = UMP + CO2. Its pathway is pyrimidine metabolism; UMP biosynthesis via de novo pathway; UMP from orotate: step 2/2. Its function is as follows. Catalyzes the decarboxylation of orotidine 5'-monophosphate (OMP) to uridine 5'-monophosphate (UMP). The protein is Orotidine 5'-phosphate decarboxylase of Pelobacter propionicus (strain DSM 2379 / NBRC 103807 / OttBd1).